The following is a 273-amino-acid chain: Dermonecrotic toxin LspaSicTox-alphaIA2i (273 aa).

Residue His5 is part of the active site. The Mg(2+) site is built by Glu25 and Asp27. His41 acts as the Nucleophile in catalysis. 2 disulfide bridges follow: Cys45/Cys51 and Cys47/Cys190. Position 85 (Asp85) interacts with Mg(2+).

It belongs to the arthropod phospholipase D family. Class II subfamily. Requires Mg(2+) as cofactor. Expressed by the venom gland.

It localises to the secreted. It carries out the reaction an N-(acyl)-sphingosylphosphocholine = an N-(acyl)-sphingosyl-1,3-cyclic phosphate + choline. The catalysed reaction is an N-(acyl)-sphingosylphosphoethanolamine = an N-(acyl)-sphingosyl-1,3-cyclic phosphate + ethanolamine. It catalyses the reaction a 1-acyl-sn-glycero-3-phosphocholine = a 1-acyl-sn-glycero-2,3-cyclic phosphate + choline. The enzyme catalyses a 1-acyl-sn-glycero-3-phosphoethanolamine = a 1-acyl-sn-glycero-2,3-cyclic phosphate + ethanolamine. In terms of biological role, dermonecrotic toxins cleave the phosphodiester linkage between the phosphate and headgroup of certain phospholipids (sphingolipid and lysolipid substrates), forming an alcohol (often choline) and a cyclic phosphate. This toxin acts on sphingomyelin (SM). It may also act on ceramide phosphoethanolamine (CPE), lysophosphatidylcholine (LPC) and lysophosphatidylethanolamine (LPE), but not on lysophosphatidylserine (LPS), and lysophosphatidylglycerol (LPG). It acts by transphosphatidylation, releasing exclusively cyclic phosphate products as second products. Induces dermonecrosis, hemolysis, increased vascular permeability, edema, inflammatory response, and platelet aggregation. This chain is Dermonecrotic toxin LspaSicTox-alphaIA2i, found in Loxosceles spadicea (Recluse spider).